Reading from the N-terminus, the 193-residue chain is Ion-translocating oxidoreductase complex subunit A (193 aa).

Transmembrane regions (helical) follow at residues 5 to 25 (LLLFVGTVLVNNFVLVKFLGL), 39 to 59 (IGMGLATTFVLTLASVCAWMV), 62 to 82 (FILLPLGLVYLRTLAFILVIA), 102 to 122 (LLGIFLPLITTNCAVLGVALL), 134 to 154 (AVYGFSAAAGFSLVMVLFAAI), and 171 to 191 (SIALITAGLMSLAFMGFTGLV).

It belongs to the NqrDE/RnfAE family. As to quaternary structure, the complex is composed of six subunits: RnfA, RnfB, RnfC, RnfD, RnfE and RnfG.

It is found in the cell inner membrane. In terms of biological role, part of a membrane-bound complex that couples electron transfer with translocation of ions across the membrane. The chain is Ion-translocating oxidoreductase complex subunit A from Yersinia enterocolitica serotype O:8 / biotype 1B (strain NCTC 13174 / 8081).